A 329-amino-acid polypeptide reads, in one-letter code: Sialic acid-binding periplasmic protein SiaP (329 aa).

The N-terminal stretch at 1–23 is a signal peptide; it reads MMKLTKLFLATAISLGVSSAVLA. N-acetyl-beta-neuraminate is bound by residues N33, D72, E90, R150, R170, and N210.

It belongs to the bacterial solute-binding protein 7 family. The complex comprises the extracytoplasmic solute receptor protein SiaP, and the fused transmembrane protein SiaT.

It localises to the periplasm. Part of the tripartite ATP-independent periplasmic (TRAP) transport system SiaPT involved in the uptake of sialic acid (N-acetyl-beta-neuraminate). This protein specifically binds sialic acid with high affinity. N-Acetylneuraminate (sialic acid) can then be incorporated into the lipooligosaccharides (LOS) as a terminal non-reducing sugar, protecting the bacterium from complement-mediated killing by normal human serum. The protein is Sialic acid-binding periplasmic protein SiaP (siaP) of Haemophilus influenzae (strain ATCC 51907 / DSM 11121 / KW20 / Rd).